The primary structure comprises 445 residues: 2-oxoisovalerate dehydrogenase subunit alpha, mitochondrial (445 aa).

The transit peptide at 1-45 directs the protein to the mitochondrion; it reads MAVAIAAARVWRLNRGLSQAALLLLRRPGARGLARSHPRRQQQQF. Residues 33-54 form a disordered region; that stretch reads LARSHPRRQQQQFSSLDDKPQF. Positions 158 and 159 each coordinate thiamine diphosphate. Residue Ser-206 coordinates K(+). Position 207 (Ser-207) interacts with thiamine diphosphate. K(+) contacts are provided by Pro-208, Thr-211, and Gln-212. Glu-238 contacts Mg(2+). Positions 239, 240, and 265 each coordinate thiamine diphosphate. Mg(2+) is bound by residues Asn-267 and Tyr-269. His-336 serves as a coordination point for thiamine diphosphate. Ser-337 carries the post-translational modification Phosphoserine; by BCKDK. Residue Thr-338 is modified to Phosphothreonine. Ser-339 and Ser-347 each carry phosphoserine. Lys-356 carries the post-translational modification N6-acetyllysine; alternate. Lys-356 carries the N6-succinyllysine; alternate modification. The residue at position 380 (Lys-380) is an N6-succinyllysine.

The protein belongs to the BCKDHA family. In terms of assembly, heterotetramer of 2 alpha/BCKDHA and 2 beta chains/BCKDHB that forms the branched-chain alpha-keto acid decarboxylase (E1) component of the BCKD complex. The branched-chain alpha-ketoacid dehydrogenase is a large complex composed of three major building blocks E1, E2 and E3. It is organized around E2, a 24-meric cubic core composed of DBT, to which are associated 6 to 12 copies of E1, and approximately 6 copies of the dehydrogenase E3, a DLD dimer. Interacts with PPM1K. Thiamine diphosphate serves as cofactor. Mg(2+) is required as a cofactor. Phosphorylated at Ser-337 by BCKDK and dephosphorylated by protein phosphatase PPM1K.

The protein localises to the mitochondrion matrix. It catalyses the reaction N(6)-[(R)-lipoyl]-L-lysyl-[protein] + 3-methyl-2-oxobutanoate + H(+) = N(6)-[(R)-S(8)-2-methylpropanoyldihydrolipoyl]-L-lysyl-[protein] + CO2. Its function is as follows. Together with BCKDHB forms the heterotetrameric E1 subunit of the mitochondrial branched-chain alpha-ketoacid dehydrogenase (BCKD) complex. The BCKD complex catalyzes the multi-step oxidative decarboxylation of alpha-ketoacids derived from the branched-chain amino-acids valine, leucine and isoleucine producing CO2 and acyl-CoA which is subsequently utilized to produce energy. The E1 subunit catalyzes the first step with the decarboxylation of the alpha-ketoacid forming an enzyme-product intermediate. A reductive acylation mediated by the lipoylamide cofactor of E2 extracts the acyl group from the E1 active site for the next step of the reaction. The protein is 2-oxoisovalerate dehydrogenase subunit alpha, mitochondrial (BCKDHA) of Pan troglodytes (Chimpanzee).